The following is a 774-amino-acid chain: Polymerase basic protein 2 (774 aa).

This sequence belongs to the influenza viruses PB2 family. As to quaternary structure, influenza RNA polymerase is composed of three subunits: PB1, PB2 and PA. Interacts (via N-terminus) with PB1 (via C-terminus). Interacts with nucleoprotein NP (via N-terminus).

It localises to the virion. It is found in the host nucleus. In terms of biological role, plays an essential role in transcription initiation and cap-stealing mechanism, in which cellular capped pre-mRNAs are used to generate primers for viral transcription. Recognizes and binds a wide range of cap structures of target pre-RNAs which are subsequently cleaved after 10-13 nucleotides by the viral protein PA. Plays a role in the initiation of the viral genome replication and modulates the activity of the ribonucleoprotein (RNP) complex. The sequence is that of Polymerase basic protein 2 from Homo sapiens (Human).